Reading from the N-terminus, the 218-residue chain is uncharacterized protein (218 aa).

The interval 1–24 (MAAQPQAPSAGGRPRAGKAVKSVA) is disordered. Residues 28-88 (KLSRESIVEG…AVRIRVIDDI (61 aa)) form the HTH tetR-type domain. Positions 51 to 70 (TINALATQLGTKGPSLYNHV) form a DNA-binding region, H-T-H motif. Thr-57 is modified (phosphothreonine; by PknH).

Phosphorylated on Thr-57 by PknH.

This is an uncharacterized protein from Mycobacterium tuberculosis (strain ATCC 25618 / H37Rv).